A 570-amino-acid polypeptide reads, in one-letter code: Urease subunit alpha (570 aa).

In terms of domain architecture, Urease spans 132-570; it reads GGIDTHVHFL…VPMARRYFLF (439 aa). Residues H137, H139, and K220 each contribute to the Ni(2+) site. The residue at position 220 (K220) is an N6-carboxylysine. H222 contacts substrate. Positions 249 and 275 each coordinate Ni(2+). H323 (proton donor) is an active-site residue. Residue D363 coordinates Ni(2+).

The protein belongs to the metallo-dependent hydrolases superfamily. Urease alpha subunit family. As to quaternary structure, heterotrimer of UreA (gamma), UreB (beta) and UreC (alpha) subunits. Three heterotrimers associate to form the active enzyme. It depends on Ni cation as a cofactor. Carboxylation allows a single lysine to coordinate two nickel ions.

It localises to the cytoplasm. It catalyses the reaction urea + 2 H2O + H(+) = hydrogencarbonate + 2 NH4(+). The protein operates within nitrogen metabolism; urea degradation; CO(2) and NH(3) from urea (urease route): step 1/1. This is Urease subunit alpha from Corynebacterium glutamicum (strain ATCC 13032 / DSM 20300 / JCM 1318 / BCRC 11384 / CCUG 27702 / LMG 3730 / NBRC 12168 / NCIMB 10025 / NRRL B-2784 / 534).